The sequence spans 231 residues: MLTRKQYELLRFISERLKESGVPPSFDEMKDALDLRSKSGIHRLITALEERGFIRRLPNRARAIEVIKLPELQAAAGNRRGFTPSVIEGNLGKVRASSSADEGERPVAVPVMGRIAAGTPIEALQTRSHTISVPPDMLGSGEHYALEVRGDSMVEAGILDGDMALIQRNESADTGDIVVALIDDEEATLKRFRRRGASIALEPANAAYEVRILPPNRVKIQGKLIGLYRKY.

Positions 26 to 46 (FDEMKDALDLRSKSGIHRLIT) form a DNA-binding region, H-T-H motif. Catalysis depends on for autocatalytic cleavage activity residues Ser152 and Lys190.

This sequence belongs to the peptidase S24 family. In terms of assembly, homodimer.

The enzyme catalyses Hydrolysis of Ala-|-Gly bond in repressor LexA.. Functionally, represses a number of genes involved in the response to DNA damage (SOS response), including recA and lexA. In the presence of single-stranded DNA, RecA interacts with LexA causing an autocatalytic cleavage which disrupts the DNA-binding part of LexA, leading to derepression of the SOS regulon and eventually DNA repair. The polypeptide is LexA repressor (Bradyrhizobium diazoefficiens (strain JCM 10833 / BCRC 13528 / IAM 13628 / NBRC 14792 / USDA 110)).